The following is a 389-amino-acid chain: S-adenosylmethionine synthase (389 aa).

Histidine 17 is an ATP binding site. Position 19 (aspartate 19) interacts with Mg(2+). A K(+)-binding site is contributed by glutamate 45. L-methionine is bound by residues glutamate 58 and glutamine 101. Positions 101-111 are flexible loop; that stretch reads QSPDISQGVTE. ATP-binding positions include 168–170, 234–235, aspartate 243, 249–250, alanine 266, and lysine 270; these read DSK, RF, and RK. Aspartate 243 is a binding site for L-methionine. Lysine 274 is an L-methionine binding site.

The protein belongs to the AdoMet synthase family. In terms of assembly, homotetramer; dimer of dimers. Mg(2+) is required as a cofactor. K(+) serves as cofactor.

The protein resides in the cytoplasm. It catalyses the reaction L-methionine + ATP + H2O = S-adenosyl-L-methionine + phosphate + diphosphate. Its pathway is amino-acid biosynthesis; S-adenosyl-L-methionine biosynthesis; S-adenosyl-L-methionine from L-methionine: step 1/1. In terms of biological role, catalyzes the formation of S-adenosylmethionine (AdoMet) from methionine and ATP. The overall synthetic reaction is composed of two sequential steps, AdoMet formation and the subsequent tripolyphosphate hydrolysis which occurs prior to release of AdoMet from the enzyme. This Geobacter metallireducens (strain ATCC 53774 / DSM 7210 / GS-15) protein is S-adenosylmethionine synthase.